The chain runs to 353 residues: UPF0283 membrane protein YcjF (353 aa).

Transmembrane regions (helical) follow at residues 70-90 (MVMG…VQWT), 100-120 (VALG…GSVV), and 213-233 (ESTL…FIAW).

Belongs to the UPF0283 family.

It localises to the cell inner membrane. The protein is UPF0283 membrane protein YcjF of Escherichia fergusonii (strain ATCC 35469 / DSM 13698 / CCUG 18766 / IAM 14443 / JCM 21226 / LMG 7866 / NBRC 102419 / NCTC 12128 / CDC 0568-73).